A 574-amino-acid polypeptide reads, in one-letter code: Streptolysin O (574 aa).

Residues 1–36 (MKDMSNKKIFKKYSRVAGLLTAALIVGNLVTANADS) form the signal peptide. Low complexity predominate over residues 37 to 52 (NKQNTANTETTTTNEQ). Disordered regions lie at residues 37-64 (NKQN…TTEK) and 84-111 (KEMP…HTEE). Residues 53–64 (PKPESSELTTEK) are compositionally biased toward basic and acidic residues. A run of 4 beta stranded transmembrane segments spans residues 263-276 (KSQI…NSKI), 283-292 (IDFKSISKGE), 361-370 (SNDVEAAFSA), and 378-390 (KTNG…LENS). Positions 532 to 542 (ECTGLAWEWWR) match the Conserved undecapeptide motif. The short motif at 564–565 (TL) is the Cholesterol binding element.

It belongs to the cholesterol-dependent cytolysin family. In terms of assembly, homooligomeric pore complex of 35 to 50 subunits; when inserted in the host membrane.

Its subcellular location is the secreted. It is found in the host cell membrane. Its function is as follows. A cholesterol-dependent toxin that causes cytolysis by forming pores in cholesterol containing host membranes. After binding to target membranes, the protein undergoes a major conformation change, leading to its insertion in the host membrane and formation of an oligomeric pore complex. Cholesterol is required for binding to host membranes, membrane insertion and pore formation; cholesterol binding is mediated by a Thr-Leu pair in the C-terminus. Can be reversibly inactivated by oxidation. The sequence is that of Streptolysin O (slo) from Streptococcus dysgalactiae subsp. equisimilis (Streptococcus equisimilis).